A 243-amino-acid polypeptide reads, in one-letter code: Nuclear cap-binding protein subunit 2 (243 aa).

Residues tyrosine 14, tyrosine 37, 106–110 (RVDFD), 117–121 (RQWGR), and 127–128 (QV) contribute to the mRNA site. One can recognise an RRM domain in the interval 34-112 (VTVYVGNMSF…RPIRVDFDWG (79 aa)). Disordered regions lie at residues 120–144 (GRGRSGGQVRDEYRTDYDPGRGGYG) and 161–243 (GGAF…RRRR). Composition is skewed to basic and acidic residues over residues 128–138 (VRDEYRTDYDP) and 173–228 (DRGD…REKG).

This sequence belongs to the RRM NCBP2 family. In terms of assembly, component of the nuclear cap-binding complex (CBC), a heterodimer composed of ABH1/CBP80 and CBP20 that interacts with m7GpppG-capped RNA.

It is found in the nucleus. It localises to the cytoplasm. Its function is as follows. Component of the cap-binding complex (CBC), which binds co-transcriptionally to the 5' cap of pre-mRNAs and is involved in various processes such as pre-mRNA splicing and RNA-mediated gene silencing (RNAi) by microRNAs (miRNAs). The CBC complex is involved in miRNA-mediated RNA interference and is required for primary miRNA processing. In the CBC complex, CBP20 recognizes and binds capped RNAs (m7GpppG-capped RNA) but requires ABH1/CBP80 to stabilize the movement of its N-terminal loop and lock the CBC into a high affinity cap-binding state with the cap structure. CBP20 also plays a role in stabilization of ABH1/CBP80 and ABH1/CBP80 localization to the nucleus. This chain is Nuclear cap-binding protein subunit 2 (CBP20), found in Oryza sativa subsp. japonica (Rice).